Consider the following 247-residue polypeptide: Triosephosphate isomerase (247 aa).

Residues N10 and K12 each contribute to the substrate site. The active-site Electrophile is the H94. The active-site Proton acceptor is E164.

The protein belongs to the triosephosphate isomerase family. As to quaternary structure, homodimer.

The enzyme catalyses D-glyceraldehyde 3-phosphate = dihydroxyacetone phosphate. The protein operates within carbohydrate biosynthesis; gluconeogenesis. Its pathway is carbohydrate degradation; glycolysis; D-glyceraldehyde 3-phosphate from glycerone phosphate: step 1/1. This chain is Triosephosphate isomerase (Tpi), found in Drosophila melanogaster (Fruit fly).